The sequence spans 349 residues: Peptide chain release factor 1 (349 aa).

Q233 carries the N5-methylglutamine modification.

It belongs to the prokaryotic/mitochondrial release factor family. Methylated by PrmC. Methylation increases the termination efficiency of RF1.

Its subcellular location is the cytoplasm. Functionally, peptide chain release factor 1 directs the termination of translation in response to the peptide chain termination codons UAG and UAA. In Pelotomaculum thermopropionicum (strain DSM 13744 / JCM 10971 / SI), this protein is Peptide chain release factor 1.